Consider the following 257-residue polypeptide: Diacetyl reductase [(S)-acetoin forming] (257 aa).

6–30 (IITGAAGGLGKGIAERLANDGFNIV) serves as a coordination point for NAD(+). Position 139 (Ser139) interacts with substrate. Residue Tyr152 is the Proton acceptor of the active site. Lys156 is an active-site residue.

Belongs to the short-chain dehydrogenases/reductases (SDR) family.

It carries out the reaction (S)-acetoin + NAD(+) = diacetyl + NADH + H(+). Functionally, catalyzes the irreversible reduction of 2,3-butanediol to (S)-acetoin in the presence of NADH. This is Diacetyl reductase [(S)-acetoin forming] (butA) from Staphylococcus epidermidis (strain ATCC 12228 / FDA PCI 1200).